Consider the following 1028-residue polypeptide: Carbamoyl phosphate synthase large chain (1028 aa).

Residues Met-1 to Glu-409 form a carboxyphosphate synthetic domain region. 12 residues coordinate ATP: Arg-129, Arg-169, Gly-175, Gly-176, Glu-208, Val-210, Glu-215, Gly-241, Val-242, His-243, Gln-285, and Glu-299. The region spanning Gln-133–Val-328 is the ATP-grasp 1 domain. Mg(2+) contacts are provided by Gln-285, Glu-299, and Asn-301. Gln-285, Glu-299, and Asn-301 together coordinate Mn(2+). An oligomerization domain region spans residues Arg-410–Val-549. The tract at residues Trp-550 to Gly-933 is carbamoyl phosphate synthetic domain. Residues His-674–Val-866 enclose the ATP-grasp 2 domain. ATP-binding residues include Arg-710, Arg-750, Leu-752, Glu-757, Gly-782, Val-783, His-784, Ser-785, Gln-825, and Glu-837. Gln-825, Glu-837, and Asn-839 together coordinate Mg(2+). Mn(2+)-binding residues include Gln-825, Glu-837, and Asn-839. One can recognise an MGS-like domain in the interval Gln-934 to Gly-1028. Residues Gln-934–Gly-1028 form an allosteric domain region.

Belongs to the CarB family. In terms of assembly, composed of two chains; the small (or glutamine) chain promotes the hydrolysis of glutamine to ammonia, which is used by the large (or ammonia) chain to synthesize carbamoyl phosphate. Tetramer of heterodimers (alpha,beta)4. It depends on Mg(2+) as a cofactor. Mn(2+) is required as a cofactor.

It carries out the reaction hydrogencarbonate + L-glutamine + 2 ATP + H2O = carbamoyl phosphate + L-glutamate + 2 ADP + phosphate + 2 H(+). The catalysed reaction is hydrogencarbonate + NH4(+) + 2 ATP = carbamoyl phosphate + 2 ADP + phosphate + 2 H(+). The protein operates within amino-acid biosynthesis; L-arginine biosynthesis; carbamoyl phosphate from bicarbonate: step 1/1. Its pathway is pyrimidine metabolism; UMP biosynthesis via de novo pathway; (S)-dihydroorotate from bicarbonate: step 1/3. Large subunit of the glutamine-dependent carbamoyl phosphate synthetase (CPSase). CPSase catalyzes the formation of carbamoyl phosphate from the ammonia moiety of glutamine, carbonate, and phosphate donated by ATP, constituting the first step of 2 biosynthetic pathways, one leading to arginine and/or urea and the other to pyrimidine nucleotides. The large subunit (synthetase) binds the substrates ammonia (free or transferred from glutamine from the small subunit), hydrogencarbonate and ATP and carries out an ATP-coupled ligase reaction, activating hydrogencarbonate by forming carboxy phosphate which reacts with ammonia to form carbamoyl phosphate. This is Carbamoyl phosphate synthase large chain from Thermus thermophilus (strain ATCC BAA-163 / DSM 7039 / HB27).